Reading from the N-terminus, the 37-residue chain is Dolichyl-diphosphooligosaccharide--protein glycosyltransferase subunit 4 (37 aa).

At 1-4 (MITD) the chain is on the lumenal side. The chain crosses the membrane as a helical span at residues 5–25 (VQLAIFANMLGVSLFLLVVLY). At 26-37 (HYVAVNNPKKQE) the chain is on the cytoplasmic side.

Belongs to the OST4 family. Component of the oligosaccharyltransferase (OST) complex. OST exists in two different complex forms which contain common core subunits RPN1, RPN2, OST48, OST4, DAD1 and TMEM258, either STT3A or STT3B as catalytic subunits, and form-specific accessory subunits. STT3A complex assembly occurs through the formation of 3 subcomplexes. Subcomplex 1 contains RPN1 and TMEM258, subcomplex 2 contains the STT3A-specific subunits STT3A, DC2/OSTC, and KCP2 as well as the core subunit OST4, and subcomplex 3 contains RPN2, DAD1, and OST48. The STT3A complex can form stable complexes with the Sec61 complex or with both the Sec61 and TRAP complexes.

It is found in the endoplasmic reticulum. The protein localises to the endoplasmic reticulum membrane. It participates in protein modification; protein glycosylation. Subunit of the oligosaccharyl transferase (OST) complex that catalyzes the initial transfer of a defined glycan (Glc(3)Man(9)GlcNAc(2) in eukaryotes) from the lipid carrier dolichol-pyrophosphate to an asparagine residue within an Asn-X-Ser/Thr consensus motif in nascent polypeptide chains, the first step in protein N-glycosylation. N-glycosylation occurs cotranslationally and the complex associates with the Sec61 complex at the channel-forming translocon complex that mediates protein translocation across the endoplasmic reticulum (ER). All subunits are required for a maximal enzyme activity. Specifically involved in maintaining stability of STT3A-containing OST complexes. This Homo sapiens (Human) protein is Dolichyl-diphosphooligosaccharide--protein glycosyltransferase subunit 4.